The chain runs to 273 residues: uncharacterized protein (273 aa).

It belongs to the PhyH family.

This is an uncharacterized protein from Mycobacterium tuberculosis (strain ATCC 25618 / H37Rv).